The following is a 408-amino-acid chain: AA9 family lytic polysaccharide monooxygenase A (408 aa).

Residues 1–20 (MKTTTYSLLALAAASKLASA) form the signal peptide. 2 residues coordinate Cu(2+): His-21 and His-103. Cys-63 and Cys-186 are joined by a disulfide. Asn-151 carries N-linked (GlcNAc...) asparagine glycosylation. His-172 contributes to the O2 binding site. Tyr-183 contacts Cu(2+). Residues Asn-331 and Asn-381 are each glycosylated (N-linked (GlcNAc...) asparagine). Positions 369–405 (GVAKQYERCGGINHTGPTTCESGSVCKKWNPYYYQCV) constitute a CBM1 domain.

This sequence belongs to the polysaccharide monooxygenase AA9 family. The cofactor is Cu(2+).

Its subcellular location is the secreted. The catalysed reaction is [(1-&gt;4)-beta-D-glucosyl]n+m + reduced acceptor + O2 = 4-dehydro-beta-D-glucosyl-[(1-&gt;4)-beta-D-glucosyl]n-1 + [(1-&gt;4)-beta-D-glucosyl]m + acceptor + H2O.. Lytic polysaccharide monooxygenase (LPMO) that depolymerizes crystalline and amorphous polysaccharides via the oxidation of scissile alpha- or beta-(1-4)-glycosidic bonds, yielding C4 oxidation products. Catalysis by LPMOs requires the reduction of the active-site copper from Cu(II) to Cu(I) by a reducing agent and H(2)O(2) or O(2) as a cosubstrate. This chain is AA9 family lytic polysaccharide monooxygenase A (eglD), found in Aspergillus kawachii (strain NBRC 4308) (White koji mold).